Here is a 273-residue protein sequence, read N- to C-terminus: Mitochondrial distribution and morphology protein 12 (273 aa).

The SMP-LTD domain occupies 1–260; it reads MSFDINWEQL…WPSWINFDFY (260 aa). The interval 76-98 is disordered; sequence MSAEEETEGSDDEGYGGDRVRNR. The segment covering 78-90 has biased composition (acidic residues); the sequence is AEEETEGSDDEGY.

The protein belongs to the MDM12 family. In terms of assembly, component of the ER-mitochondria encounter structure (ERMES) or MDM complex, composed of MMM1, MDM10, MDM12 and MDM34. An MMM1 homodimer associates with one molecule of MDM12 on each side in a pairwise head-to-tail manner, and the SMP-LTD domains of MMM1 and MDM12 generate a continuous hydrophobic tunnel for phospholipid trafficking.

It localises to the mitochondrion outer membrane. It is found in the endoplasmic reticulum membrane. Its function is as follows. Component of the ERMES/MDM complex, which serves as a molecular tether to connect the endoplasmic reticulum (ER) and mitochondria. Components of this complex are involved in the control of mitochondrial shape and protein biogenesis, and function in nonvesicular lipid trafficking between the ER and mitochondria. MDM12 is required for the interaction of the ER-resident membrane protein MMM1 and the outer mitochondrial membrane-resident beta-barrel protein MDM10. The MDM12-MMM1 subcomplex functions in the major beta-barrel assembly pathway that is responsible for biogenesis of all mitochondrial outer membrane beta-barrel proteins, and acts in a late step after the SAM complex. The MDM10-MDM12-MMM1 subcomplex further acts in the TOM40-specific pathway after the action of the MDM12-MMM1 complex. Essential for establishing and maintaining the structure of mitochondria and maintenance of mtDNA nucleoids. This Vanderwaltozyma polyspora (strain ATCC 22028 / DSM 70294 / BCRC 21397 / CBS 2163 / NBRC 10782 / NRRL Y-8283 / UCD 57-17) (Kluyveromyces polysporus) protein is Mitochondrial distribution and morphology protein 12.